Reading from the N-terminus, the 851-residue chain is Meiotically up-regulated gene 87 protein (851 aa).

It belongs to the nucleoporin interacting component (NIC) family.

It is found in the nucleus envelope. Has a role in meiosis. This is Meiotically up-regulated gene 87 protein (mug87) from Schizosaccharomyces pombe (strain 972 / ATCC 24843) (Fission yeast).